Consider the following 450-residue polypeptide: UDP-N-acetylmuramoylalanine--D-glutamate ligase (450 aa).

Position 119–125 (119–125 (GSNGKTT)) interacts with ATP.

It belongs to the MurCDEF family.

The protein resides in the cytoplasm. The enzyme catalyses UDP-N-acetyl-alpha-D-muramoyl-L-alanine + D-glutamate + ATP = UDP-N-acetyl-alpha-D-muramoyl-L-alanyl-D-glutamate + ADP + phosphate + H(+). Its pathway is cell wall biogenesis; peptidoglycan biosynthesis. Cell wall formation. Catalyzes the addition of glutamate to the nucleotide precursor UDP-N-acetylmuramoyl-L-alanine (UMA). This chain is UDP-N-acetylmuramoylalanine--D-glutamate ligase, found in Streptococcus pneumoniae serotype 4 (strain ATCC BAA-334 / TIGR4).